Consider the following 740-residue polypeptide: DNA polymerase iota (740 aa).

The tract at residues 1–21 is disordered; the sequence is MEKLGVEPEEEGGGDDDEEDA. Residues 7–21 are compositionally biased toward acidic residues; sequence EPEEEGGGDDDEEDA. Positions 55-268 constitute a UmuC domain; that stretch reads IVHVDLDCFY…NHIKEIPGIG (214 aa). Positions 59 and 60 each coordinate Mg(2+). Positions 59 and 60 each coordinate Mn(2+). A 2'-deoxyribonucleoside 5'-triphosphate-binding residues include Y64 and R96. Residue D151 participates in Mg(2+) binding. D151 contributes to the Mn(2+) binding site. The active-site Proton acceptor is E152. DNA-binding regions lie at residues 249–314 and 325–439; these read ESCQ…FGED and QSFS…CNLK. Positions 527 to 544 match the Ubiquitin-binding 1 (UBM1) motif; that stretch reads VDQEVFKQLPVDIQEEIL. Disordered regions lie at residues 581–615 and 671–704; these read PINP…SSYM and NHTT…KITF. Positions 605–615 are enriched in low complexity; sequence SGFNSSSSSYM. A compositionally biased stretch (basic and acidic residues) spans 672–702; the sequence is HTTDSHKQTVATDSHEGLTENREPDSVDEKI. A Ubiquitin-binding 2 (UBM2) motif is present at residues 708-725; the sequence is IDPQVFYELPEAVQKELL.

The protein belongs to the DNA polymerase type-Y family. As to quaternary structure, interacts with POLH. Interacts with REV1. Interacts with ubiquitin. Mg(2+) serves as cofactor. Requires Mn(2+) as cofactor. Monoubiquitinated. Protein monoubiquitination prevents POLI binding to ubiquitin via the ubiquitin-binding motif 1 and ubiquitin-binding motif 2. Ubiquitous. Highly expressed in testis.

It localises to the nucleus. It catalyses the reaction DNA(n) + a 2'-deoxyribonucleoside 5'-triphosphate = DNA(n+1) + diphosphate. Error-prone DNA polymerase specifically involved in DNA repair. Plays an important role in translesion synthesis, where the normal high-fidelity DNA polymerases cannot proceed and DNA synthesis stalls. Favors Hoogsteen base-pairing in the active site. Inserts the correct base with high-fidelity opposite an adenosine template. Exhibits low fidelity and efficiency opposite a thymidine template, where it will preferentially insert guanosine. May play a role in hypermutation of immunoglobulin genes. Forms a Schiff base with 5'-deoxyribose phosphate at abasic sites, but may not have lyase activity. This Homo sapiens (Human) protein is DNA polymerase iota (POLI).